A 64-amino-acid chain; its full sequence is Temporin-ALd (64 aa).

A signal peptide spans 1-22; sequence MFTMKKSLLLLFFLGTIHLSLC. A propeptide spanning residues 23–46 is cleaved from the precursor; that stretch reads EQERNAEEERRDDLGERQAEVEKR. Position 62 is a leucine amide (L62).

In terms of tissue distribution, expressed by the skin glands.

It is found in the secreted. Antimicrobial peptide with activity against Gram-positive and Gram-negative bacteria and against fungi. Has been tested against S.aureus (MIC=1.25 ug/mL), B.pumilus (MIC=2.5 ug/mL), B.cereus (MIC=15.0 ug/mL), E.coli (MIC=1.25 ug/mL), B.dysenteriae (MIC=5.0 ug/mL), A.cacoaceticus (MIC=15.0 ug/mL), P.aeruginosa (MIC=5.0 ug/mL) and C.albicans (MIC=1.25 ug/mL). Also shows a weak hemolytic activity. The polypeptide is Temporin-ALd (Amolops loloensis (Lolokou Sucker Frog)).